The sequence spans 251 residues: Aspartate/glutamate leucyltransferase (251 aa).

The protein belongs to the R-transferase family. Bpt subfamily.

It localises to the cytoplasm. It carries out the reaction N-terminal L-glutamyl-[protein] + L-leucyl-tRNA(Leu) = N-terminal L-leucyl-L-glutamyl-[protein] + tRNA(Leu) + H(+). It catalyses the reaction N-terminal L-aspartyl-[protein] + L-leucyl-tRNA(Leu) = N-terminal L-leucyl-L-aspartyl-[protein] + tRNA(Leu) + H(+). Functions in the N-end rule pathway of protein degradation where it conjugates Leu from its aminoacyl-tRNA to the N-termini of proteins containing an N-terminal aspartate or glutamate. The protein is Aspartate/glutamate leucyltransferase of Nitrosospira multiformis (strain ATCC 25196 / NCIMB 11849 / C 71).